The primary structure comprises 160 residues: Eosinophil cationic protein (160 aa).

A signal peptide spans 1–27; sequence MVPKLFTSQICLLLLLGLMGVEGSLHA. The segment at 28–72 is required for nearly all of the bactericidal activity; partially involved in LPS-binding and bacterial membrane depolarization; sequence RPPQFTRAQWFAIQHISLNPPRCTIAMRAINNYRWRCKNQNTFLR. H42 acts as the Proton acceptor in catalysis. 4 disulfides stabilise this stretch: C50–C110, C64–C123, C82–C138, and C89–C98. A 3'-nitrotyrosine modification is found at Y60. 65 to 69 contacts substrate; that stretch reads KNQNT. N-linked (GlcNAc...) asparagine glycosylation is found at N84, N92, and N119. H155 functions as the Proton donor in the catalytic mechanism.

This sequence belongs to the pancreatic ribonuclease family. Interacts with bacterial lipopolysaccharide (LPS) and lipoteichoic acid (LTA). In vitro interacts with and insert into lipid bilayers composed of dioleoyl phosphatidylcholine and dioleoyl phosphatidylglycerol. In vitro, tends to form amyloid-like aggregates at pH 3, but not at pH 5, nor 7.

Its subcellular location is the secreted. Cytotoxin and helminthotoxin with low-efficiency ribonuclease activity. Possesses a wide variety of biological activities. Exhibits antibacterial activity, including cytoplasmic membrane depolarization of preferentially Gram-negative, but also Gram-positive strains. Promotes E.coli outer membrane detachment, alteration of the overall cell shape and partial loss of cell content. The protein is Eosinophil cationic protein (RNASE3) of Homo sapiens (Human).